We begin with the raw amino-acid sequence, 443 residues long: Ribosomal protein uS12 methylthiotransferase RimO (443 aa).

The 111-residue stretch at 8 to 118 (PKVGFVSLGC…VVNAVHEVVP (111 aa)) folds into the MTTase N-terminal domain. Residues Cys-17, Cys-53, Cys-82, Cys-151, Cys-155, and Cys-158 each coordinate [4Fe-4S] cluster. The region spanning 137-375 (LTPRHYAYLK…MAHQQAISAA (239 aa)) is the Radical SAM core domain. The 66-residue stretch at 378–443 (QQRIGKEIEV…DEYDMWAEPI (66 aa)) folds into the TRAM domain.

This sequence belongs to the methylthiotransferase family. RimO subfamily. [4Fe-4S] cluster is required as a cofactor.

It localises to the cytoplasm. It catalyses the reaction L-aspartate(89)-[ribosomal protein uS12]-hydrogen + (sulfur carrier)-SH + AH2 + 2 S-adenosyl-L-methionine = 3-methylsulfanyl-L-aspartate(89)-[ribosomal protein uS12]-hydrogen + (sulfur carrier)-H + 5'-deoxyadenosine + L-methionine + A + S-adenosyl-L-homocysteine + 2 H(+). Functionally, catalyzes the methylthiolation of an aspartic acid residue of ribosomal protein uS12. The sequence is that of Ribosomal protein uS12 methylthiotransferase RimO from Pseudomonas entomophila (strain L48).